Here is a 1252-residue protein sequence, read N- to C-terminus: MFKCPERVSIKKKEDILDLPNLVEVQIKSYKQFLQIGKLAEERENIGLEEVFREIFPIKSYNEATILEYLSYNLGVPKYSPEECIRRGITYSVTLKVRFRLTDETGIKEEEVYMGTIPIMTDKGTFIINGAERVVVSQVHRSPGINFEQEKHSKGNVLFSFRIIPYRGSWLEASFDINDLIYIHIDRKKRRRKILAMTFIRALGYSTDADIIEEFFAVEEHSLRSEKDFVALVGKVLADNVVDADSSLVYGKAGEKLSTAMLKRILDAGVQSLKIAVGADENHPIIKMLAKDPTDSYEAALKDFYRRLRPGEPATLANARSTIMRLFFDSKRYNLGRVGRYKLNKKLGFPLDDETLSQVTLRKEDVIGALKYLIRLRMGDEKTSIDDIDHLANRRVRSVGELIQNHCRSGLARMEKIVRERMNLFDFSSDTLTPGKIISAKGLVSVLKDFFSRSQLSQFMDQTNPVAELTHKRRLSALGPGGLNRERAGFEVRDVHSSHYGRICPIETPEGPNIGLITSLSSFAKINEFGFIETPYRVVRDGIVTDEIEYMTADVEEDCVIAQASAELDEYNMFKDSVCWARYKGEAFEADTSTVTHMDVSPKQLVSVVTGLIPFLEHDDANRALMGSNMQRQAVPLLKTEAAIVGTGLEGRAAKDSGAIVVAQEDGVVEYVDSYEIVVAKKNNPTLKDTYPLKKFLRSNSGTCINQTPLCSVGDVVTHGDVLADGPATDKGELALGKNVLVAFMPWYGYNFEDAIIISEKLIKQDAYTSIYIEEFELTARDTKLGKEEITRDIPNVSEEVLANLGEDGIVRIGAEVKPGDILVGKITPKSETELAPEERLLRAIFGEKAADVKDASLTVPPGTEGVVMDVKVFSRKDRLSKSDDELVEEAVHLKDLQKEYKSQLAQLKMEHREKLGALLLNEKAPAAIIHRRSADILVQEGAVFDQETIELLERESLVDLLMAPCDMYDVLKDILSNYETAVQRLEVNYKTEAEHIKEGDADLDHGVIRQVKVYVASKRKLQVGDKMAGRHGNKGVVSKIVPEADMPFLANGETVQMILNPLGVPSRMNLGQVLETHLGYAAKTAGIYVKTPVFEGFPESRIWDMMIEQGLPEDGKSYLFDGKTGERFDSKVVVGYIYMLKLSHLIADKIHARSIGPYSLVTQQPLGGKAQMGGQRFGEMEVWALEAYGVAHMLQEILTVKSDDVSGRTRIYESIVKGENLLRSGTPESFNVLIKEMQGLGLDVRPMVVDA.

It belongs to the RNA polymerase beta chain family. The RNAP catalytic core consists of 2 alpha, 1 beta, 1 beta' and 1 omega subunit. When a sigma factor is associated with the core the holoenzyme is formed, which can initiate transcription.

The enzyme catalyses RNA(n) + a ribonucleoside 5'-triphosphate = RNA(n+1) + diphosphate. DNA-dependent RNA polymerase catalyzes the transcription of DNA into RNA using the four ribonucleoside triphosphates as substrates. The sequence is that of DNA-directed RNA polymerase subunit beta from Chlamydia muridarum (strain MoPn / Nigg).